We begin with the raw amino-acid sequence, 170 residues long: Adenine phosphoribosyltransferase (170 aa).

Belongs to the purine/pyrimidine phosphoribosyltransferase family. In terms of assembly, homodimer.

The protein resides in the cytoplasm. The catalysed reaction is AMP + diphosphate = 5-phospho-alpha-D-ribose 1-diphosphate + adenine. It participates in purine metabolism; AMP biosynthesis via salvage pathway; AMP from adenine: step 1/1. Its function is as follows. Catalyzes a salvage reaction resulting in the formation of AMP, that is energically less costly than de novo synthesis. The chain is Adenine phosphoribosyltransferase from Prochlorococcus marinus (strain AS9601).